The sequence spans 294 residues: Probable 2-(5''-triphosphoribosyl)-3'-dephosphocoenzyme-A synthase (294 aa).

This sequence belongs to the CitG/MdcB family.

It catalyses the reaction 3'-dephospho-CoA + ATP = 2'-(5''-triphospho-alpha-D-ribosyl)-3'-dephospho-CoA + adenine. The chain is Probable 2-(5''-triphosphoribosyl)-3'-dephosphocoenzyme-A synthase from Streptococcus equi subsp. zooepidemicus (strain H70).